The primary structure comprises 97 residues: UPF0125 protein plu3376 (97 aa).

The protein belongs to the UPF0125 (RnfH) family.

The chain is UPF0125 protein plu3376 from Photorhabdus laumondii subsp. laumondii (strain DSM 15139 / CIP 105565 / TT01) (Photorhabdus luminescens subsp. laumondii).